Reading from the N-terminus, the 273-residue chain is Shikimate dehydrogenase (NADP(+)) (273 aa).

Shikimate is bound by residues 15-17 (SQS) and T62. K66 functions as the Proton acceptor in the catalytic mechanism. E78 is an NADP(+) binding site. The shikimate site is built by N87 and D102. NADP(+) is bound by residues 127–131 (GAGGA), 151–156 (NRTVTK), and M215. Y217 is a shikimate binding site. Residue G239 coordinates NADP(+).

Belongs to the shikimate dehydrogenase family. As to quaternary structure, homodimer.

It carries out the reaction shikimate + NADP(+) = 3-dehydroshikimate + NADPH + H(+). It participates in metabolic intermediate biosynthesis; chorismate biosynthesis; chorismate from D-erythrose 4-phosphate and phosphoenolpyruvate: step 4/7. Its function is as follows. Involved in the biosynthesis of the chorismate, which leads to the biosynthesis of aromatic amino acids. Catalyzes the reversible NADPH linked reduction of 3-dehydroshikimate (DHSA) to yield shikimate (SA). The sequence is that of Shikimate dehydrogenase (NADP(+)) from Laribacter hongkongensis (strain HLHK9).